The sequence spans 60 residues: Large ribosomal subunit protein uL30 (60 aa).

It belongs to the universal ribosomal protein uL30 family. Part of the 50S ribosomal subunit.

The protein is Large ribosomal subunit protein uL30 of Shewanella woodyi (strain ATCC 51908 / MS32).